The following is a 252-amino-acid chain: Phosphate import ATP-binding protein PstB 1 (252 aa).

Residues 6-247 (ISSKDLHLYY…PKEKQTEDYI (242 aa)) enclose the ABC transporter domain. Residue 38–45 (GPSGCGKS) participates in ATP binding.

The protein belongs to the ABC transporter superfamily. Phosphate importer (TC 3.A.1.7) family. The complex is composed of two ATP-binding proteins (PstB), two transmembrane proteins (PstC and PstA) and a solute-binding protein (PstS).

The protein resides in the cell membrane. The enzyme catalyses phosphate(out) + ATP + H2O = ADP + 2 phosphate(in) + H(+). Functionally, part of the ABC transporter complex PstSACB involved in phosphate import. Responsible for energy coupling to the transport system. In Enterococcus faecalis (strain ATCC 700802 / V583), this protein is Phosphate import ATP-binding protein PstB 1.